A 273-amino-acid polypeptide reads, in one-letter code: Putative inactive beta-glucuronidase protein GUSBP11 (273 aa).

Residues 1–20 form a disordered region; the sequence is MTAAETGRGKPRLGGGSGLG.

Belongs to the glycosyl hydrolase 2 family.

This is Putative inactive beta-glucuronidase protein GUSBP11 (GUSBP11) from Homo sapiens (Human).